The following is a 793-amino-acid chain: E3 UFM1-protein ligase 1 (793 aa).

Alanine 2 is modified (N-acetylalanine). Residues 2-200 (ADAWEEIRRL…RGLFSAITRP (199 aa)) are mediates interaction with DDRGK1. The tract at residues 2 to 212 (ADAWEEIRRL…VNSLVSKYGF (211 aa)) is required for E3 UFM1-protein ligase activity. An involved in CDK5RAP3-binding region spans residues 121-250 (DRLSEEVNDK…KAVFVPDIYS (130 aa)). The segment at 200-400 (PTAVNSLVSK…NPVHLITEED (201 aa)) is mediates interaction with TRIP4. Residues 410-473 (VNTNKKDKKD…SSHAGKKKPD (64 aa)) are disordered. An Omega-N-methylarginine modification is found at arginine 433. Serine 458 and serine 462 each carry phosphoserine. The segment at 490 to 683 (IPDAPEEFIS…QLKVTEDPAL (194 aa)) is mediates interaction with CDK5RAP3. The residue at position 535 (threonine 535) is a Phosphothreonine. The tract at residues 742–769 (NKKSGQGEDPSSDDLDKEQHDVTNTTRK) is disordered. Phosphoserine occurs at positions 752 and 753. Over residues 758-769 (KEQHDVTNTTRK) the composition is skewed to basic and acidic residues.

Belongs to the UFL1 family. As to quaternary structure, catalytic component of the UFM1 ribosome E3 ligase (UREL) complex, composed of UFL1, DDRGK1 and CDK5RAP3. Interacts with E2-like enzyme UFC1. Interacts with RELA. Interacts with NBN; promoting recruitment to double-strand breaks following DNA damage. Interacts (when phosphorylated) with YWHAG/14-3-3-gamma; sequestering UFL1 and preventing its association with PDCD1/PD-1 substrate. Ubiquitinated, leading to its degradation by the proteasome. Interaction with CDK5RAP3 protects both proteins against ubiquitination and degradation via the proteasome. In terms of processing, phosphorylated at Ser-462 by ATM, enhancing protein ligase activity and promoting ATM activation in a positive feedback loop. Phosphorylation at Thr-535 by AMPK promotes its interaction with YWHAG/14-3-3-gamma, thereby preventing UFL1 association with PDCD1/PD-1 substrate. Ubiquitously expressed with expression detected in brain, skeletal muscle, lung, heart, gall bladder, liver, small intestine, pancreas, spleen and kidney (at protein level). At 8 weeks after birth, high expression in the Purkinje cell layer of the cerebellum.

It localises to the endoplasmic reticulum membrane. It is found in the cytoplasm. Its subcellular location is the cytosol. The protein resides in the nucleus. The protein localises to the chromosome. In terms of biological role, E3 protein ligase that mediates ufmylation, the covalent attachment of the ubiquitin-like modifier UFM1 to lysine residues on target proteins, and which plays a key role in various processes, such as ribosome recycling, response to DNA damage, interferon response or reticulophagy (also called ER-phagy). Catalyzes ufmylation of many protein, such as CD274/PD-L1, CDK5RAP3, CYB5R3, DDRGK1, EIF6, histone H4, MRE11, P4HB, PDCD1/PD-1, TRIP4, RPN1, RPS20/uS10, RPL10/uL16, RPL26/uL24, SYVN1/HRD1 and TP53/p53. As part of the UREL complex, plays a key role in ribosome recycling by catalyzing mono-ufmylation of RPL26/uL24 subunit of the 60S ribosome. Ufmylation of RPL26/uL24 occurs on free 60S ribosomes following ribosome dissociation: it weakens the junction between post-termination 60S subunits and SEC61 translocons, promoting release and recycling of the large ribosomal subunit from the endoplasmic reticulum membrane. Ufmylation of RPL26/uL24 and subsequent 60S ribosome recycling either take place after normal termination of translation or after ribosome stalling during cotranslational translocation at the endoplasmic reticulum. Involved in reticulophagy in response to endoplasmic reticulum stress by mediating ufmylation of proteins such as CYB5R3 and RPN1, thereby promoting lysosomal degradation of ufmylated proteins. Ufmylation in response to endoplasmic reticulum stress is essential for processes such as hematopoiesis, blood vessel morphogenesis or inflammatory response. Mediates ufmylation of DDRGK1 and CDK5RAP3; the role of these modifications is however unclear: as both DDRGK1 and CDK5RAP3 act as substrate adapters for ufmylation, it is uncertain whether ufmylation of these proteins is, a collateral effect or is required for ufmylation. Acts as a negative regulator of T-cell activation by mediating ufmylation and stabilization of PDCD1/PD-1. Also involved in the response to DNA damage: recruited to double-strand break sites following DNA damage and mediates monoufmylation of histone H4 and ufmylation of MRE11. Mediates ufmylation of TP53/p53, promoting its stability. Catalyzes ufmylation of TRIP4, thereby playing a role in nuclear receptor-mediated transcription. Required for hematopoietic stem cell function and hematopoiesis. The polypeptide is E3 UFM1-protein ligase 1 (Rattus norvegicus (Rat)).